The chain runs to 227 residues: Probable septum site-determining protein MinC (227 aa).

It belongs to the MinC family. As to quaternary structure, interacts with MinD and FtsZ.

In terms of biological role, cell division inhibitor that blocks the formation of polar Z ring septums. Rapidly oscillates between the poles of the cell to destabilize FtsZ filaments that have formed before they mature into polar Z rings. Prevents FtsZ polymerization. The protein is Probable septum site-determining protein MinC of Shouchella clausii (strain KSM-K16) (Alkalihalobacillus clausii).